Consider the following 697-residue polypeptide: PAN2-PAN3 deadenylation complex subunit PAN3 (697 aa).

A C3H1-type zinc finger spans residues 7–36 (TAKDTLCKNILIYGYCKYENKGCAFSHNRQ). The disordered stretch occupies residues 40–67 (QQQQATNTSNNSTSVITPNSANSTASSA). Short sequence motifs (PABPC-interacting motif-2 (PAM-2)) lie at residues 69–89 (LSSK…VSNL) and 106–126 (FKPE…TQRP). The disordered stretch occupies residues 106 to 240 (FKPENGVSEP…SAPTPGSETP (135 aa)). Residues 119-153 (DSPTTQRPFTSKRFNVSTPSFTPTNFDFANNSNAD) show a composition bias toward polar residues. The segment covering 172–187 (QNQQQQQQQQQQQQKQ) has biased composition (low complexity). The span at 212–224 (GVSQSSPSTNPYF) shows a compositional bias: polar residues. Positions 308–576 (QSLSHSNLPE…DLNEFSQRLT (269 aa)) are pseudokinase domain. Residues Arg361, 416–423 (DYYPNSIS), and 470–471 (SK) contribute to the ATP site. Positions 577–615 (PKMFNIIDSLQNSSDFIEGQLTSELENARLFRLMTKLNY) form a coiled coil. Residues 616–697 (LIHDNSNSEN…IDTKFRLMRE (82 aa)) form a knob domain region.

The protein belongs to the protein kinase superfamily. PAN3 family. In terms of assembly, homodimer. Forms a heterotrimer with a catalytic subunit PAN2 to form the poly(A)-nuclease (PAN) deadenylation complex. Interacts (via PAM-2 motif) with poly(A)-binding protein PAB1 (via PABC domain), conferring substrate specificity of the enzyme complex.

Its subcellular location is the cytoplasm. Regulatory subunit of the poly(A)-nuclease (PAN) deadenylation complex, one of two cytoplasmic mRNA deadenylases involved in mRNA turnover. PAN specifically shortens poly(A) tails of RNA and the activity is stimulated by poly(A)-binding protein PAB1. PAN deadenylation is followed by rapid degradation of the shortened mRNA tails by the CCR4-NOT complex. Deadenylated mRNAs are then degraded by two alternative mechanisms, namely exosome-mediated 3'-5' exonucleolytic degradation, or deadenylation-dependent mRNA decaping and subsequent 5'-3' exonucleolytic degradation by XRN1. May also be involved in post-transcriptional maturation of mRNA poly(A) tails. PAN3 acts as a positive regulator for PAN activity, recruiting the catalytic subunit PAN2 to mRNA via its interaction with RNA and with PAB1. The sequence is that of PAN2-PAN3 deadenylation complex subunit PAN3 from Candida albicans (strain SC5314 / ATCC MYA-2876) (Yeast).